A 401-amino-acid polypeptide reads, in one-letter code: Pyruvyl transferase 1 (401 aa).

The first 30 residues, 1 to 30 (MFANINIRKSVWLFLLAAVSCTLFIYGVTR), serve as a signal peptide directing secretion. The segment at 38–64 (NPSSLTSPSSSTSVDKKKPLFTKSPRN) is disordered. A compositionally biased stretch (low complexity) spans 39–50 (PSSLTSPSSSTS).

Belongs to the polysaccharide pyruvyl transferase family.

Functionally, involved in cell wall biogenesis. Has a role in the addition of Gal-beta1,3 moieties to galactomannans and their subsequent pyruvylation. This is Pyruvyl transferase 1 (pvg1) from Schizosaccharomyces pombe (strain 972 / ATCC 24843) (Fission yeast).